The primary structure comprises 106 residues: Probable NADP-dependent dehydrogenase in aabA 3'region (106 aa).

Leucine 4–isoleucine 28 serves as a coordination point for NADP(+).

This sequence belongs to the short-chain dehydrogenases/reductases (SDR) family.

This chain is Probable NADP-dependent dehydrogenase in aabA 3'region, found in Dichelobacter nodosus (Bacteroides nodosus).